The following is a 370-amino-acid chain: 3-isopropylmalate dehydrogenase (370 aa).

77–90 (GPKWDGVPYDARPE) is an NAD(+) binding site. Arg-97, Arg-107, Arg-135, and Asp-226 together coordinate substrate. Mg(2+) is bound by residues Asp-226, Asp-250, and Asp-254. 290 to 302 (GSAPDIAGKGMAN) provides a ligand contact to NAD(+).

This sequence belongs to the isocitrate and isopropylmalate dehydrogenases family. LeuB type 1 subfamily. As to quaternary structure, homodimer. Requires Mg(2+) as cofactor. It depends on Mn(2+) as a cofactor.

Its subcellular location is the cytoplasm. The enzyme catalyses (2R,3S)-3-isopropylmalate + NAD(+) = 4-methyl-2-oxopentanoate + CO2 + NADH. Its pathway is amino-acid biosynthesis; L-leucine biosynthesis; L-leucine from 3-methyl-2-oxobutanoate: step 3/4. Catalyzes the oxidation of 3-carboxy-2-hydroxy-4-methylpentanoate (3-isopropylmalate) to 3-carboxy-4-methyl-2-oxopentanoate. The product decarboxylates to 4-methyl-2 oxopentanoate. The sequence is that of 3-isopropylmalate dehydrogenase from Rhodopseudomonas palustris (strain ATCC BAA-98 / CGA009).